Here is a 381-residue protein sequence, read N- to C-terminus: uncharacterized protein (381 aa).

An N-terminal signal peptide occupies residues 1 to 16; sequence MQTLLFYFFFINLIFA. The Lumenal segment spans residues 17 to 303; it reads HDLNVKTYKP…KILENSPCPN (287 aa). Cys-118 and Cys-149 are disulfide-bonded. 6 N-linked (GlcNAc...) asparagine glycosylation sites follow: Asn-133, Asn-192, Asn-225, Asn-243, Asn-246, and Asn-287. The chain crosses the membrane as a helical span at residues 304 to 324; sequence QPSIQPFGILMMLVSTIYGNF. At 325-359 the chain is on the cytoplasmic side; sequence KNLYNCIKRNTIGYIYNSIYDFWITEGMLFPMRNM. The helical transmembrane segment at 360–380 threads the bilayer; it reads DIFKITAISIGLSIPVFLWLL. A topological domain (lumenal) is located at residue Lys-381.

It belongs to the calreticulin family.

The protein localises to the endoplasmic reticulum membrane. This is an uncharacterized protein from Schizosaccharomyces pombe (strain 972 / ATCC 24843) (Fission yeast).